The primary structure comprises 121 residues: Flagellar hook-basal body complex protein FliE (121 aa).

The protein belongs to the FliE family.

It is found in the bacterial flagellum basal body. The chain is Flagellar hook-basal body complex protein FliE from Saccharophagus degradans (strain 2-40 / ATCC 43961 / DSM 17024).